A 629-amino-acid polypeptide reads, in one-letter code: Neuronal acetylcholine receptor subunit alpha-4 (629 aa).

The first 30 residues, 1–30, serve as a signal peptide directing secretion; sequence MEIGGSGAPPPLLLLPLLLLLGTGLLPASS. The Extracellular portion of the chain corresponds to 32 to 249; it reads IETRAHAEER…IIRRLPLFYT (218 aa). N-linked (GlcNAc...) asparagine glycosylation occurs at N59. V78 and E80 together coordinate Ca(2+). 2 N-linked (GlcNAc...) asparagine glycosylation sites follow: N109 and N176. 2 cysteine pairs are disulfide-bonded: C163/C177 and C227/C228. The helical transmembrane segment at 250–270 threads the bilayer; sequence INLIIPCLLISCLTVLVFYLP. C273 carries S-palmitoyl cysteine lipidation. 2 consecutive transmembrane segments (helical) span residues 279-299 and 312-332; these read LCIS…EIIP and LLFT…VLNV. The Cytoplasmic portion of the chain corresponds to 333–603; the sequence is HHRSPRTHTM…KYVAMVIDRI (271 aa). 2 disordered regions span residues 420–459 and 503–529; these read ETQP…NSSG and SLTE…SDQT. S427 carries the phosphoserine modification. The segment covering 431-442 has biased composition (basic and acidic residues); the sequence is KVPDLKTSEVEK. The span at 449–459 shows a compositional bias: low complexity; sequence PGSCHPPNSSG. A compositionally biased stretch (polar residues) spans 504–529; that stretch reads LTESKPTGSPASLKTRPSQLPVSDQT. Residues S540 and S543 each carry the phosphoserine modification. Residues 604 to 624 form a helical membrane-spanning segment; that stretch reads FLWMFIIVCLLGTVGLFLPPW.

This sequence belongs to the ligand-gated ion channel (TC 1.A.9) family. Acetylcholine receptor (TC 1.A.9.1) subfamily. Alpha-4/CHRNA4 sub-subfamily. Neuronal AChR is composed of two different types of subunits: alpha and beta. CHRNA4 forms heteropentameric neuronal acetylcholine receptors with CHRNB2 and CHRNB4, as well as CHRNA5 and CHRNB3 as accesory subunits. Found in two major stoichiometric forms, LS (low agonist sensitivity): (CHRNA4)3:(CHRNB2)2 and HS (high agonist sensitivity): (CHRNA4)2:(CHRNB2)3, the two stoichiometric forms differ in their unitary conductance, calcium permeability, ACh sensitivity and potentiation by divalent cation. Cells produce predominantly an (CHRNA4)3:(CHRNB2)2 nAChR. The (CHRNA4)2:(CHRNB2)3 expression is selectively up-regulated by nicotine and has lower single channel conductance and calcium permeability. In the striatum, also forms CHRNA4:CHRNA6:CHRNB2 complexes. Also found in the stoichiometric form: (CHRNA4:CHRNB2)2:CHRNB3. Interacts with RIC3; which is required for proper folding and assembly. Interacts with LYPD6.

Its subcellular location is the synaptic cell membrane. The protein resides in the cell membrane. The enzyme catalyses K(+)(in) = K(+)(out). The catalysed reaction is Na(+)(in) = Na(+)(out). It carries out the reaction Ca(2+)(in) = Ca(2+)(out). Its activity is regulated as follows. Activated by a myriad of ligands such as acetylcholine, cytisine, nicotine, choline and epibatidine. Channel potentiation by calcium is stoichiometry-selective, CHRNA4:CHRNB2 nACh receptor is achieved by calcium association with topographically distinct sites framed by anionic residues within the CHRNA4 subunit and between the CHRNA4 and CHRNB2 subunits. nAChR activity is inhibited by the antagonist alpha-conotoxins BuIA, PnIA, GID and MII, small disulfide-constrained peptides from cone snails. Its function is as follows. Component of neuronal acetylcholine receptors (nAChRs) that function as pentameric, ligand-gated cation channels with high calcium permeability among other activities. nAChRs are excitatory neurotrasnmitter receptors formed by a collection of nAChR subunits known to mediate synaptic transmission in the nervous system and the neuromuscular junction. Each nAchR subunit confers differential attributes to channel properties, including activation, deactivation and desensitization kinetics, pH sensitivity, cation permeability, and binding to allosteric modulators. CHRNA4 forms heteropentameric neuronal acetylcholine receptors with CHRNB2 and CHRNB4, as well as CHRNA5 and CHRNB3 as accesory subunits. Is the most abundant nAChR subtype expressed in the central nervous system. Found in two major stoichiometric forms,(CHRNA4)3:(CHRNB2)2 and (CHRNA4)2:(CHRNB2)3, the two stoichiometric forms differ in their unitary conductance, calcium permeability, ACh sensitivity and potentiation by divalent cation. Involved in the modulation of calcium-dependent signaling pathways, influences the release of neurotransmitters, including dopamine, glutamate and GABA. This Mus musculus (Mouse) protein is Neuronal acetylcholine receptor subunit alpha-4 (Chrna4).